Consider the following 107-residue polypeptide: Sperm-specific class P protein 31 (107 aa).

Residues 1–107 (MINIDPPSGD…GEVVVKMVAS (107 aa)) enclose the MSP domain.

Expressed at higher level in testis.

This chain is Sperm-specific class P protein 31 (ssp-31), found in Caenorhabditis elegans.